We begin with the raw amino-acid sequence, 494 residues long: Glycogen synthase (494 aa).

Lys15 serves as a coordination point for ADP-alpha-D-glucose.

It belongs to the glycosyltransferase 1 family. Bacterial/plant glycogen synthase subfamily.

The enzyme catalyses [(1-&gt;4)-alpha-D-glucosyl](n) + ADP-alpha-D-glucose = [(1-&gt;4)-alpha-D-glucosyl](n+1) + ADP + H(+). Its pathway is glycan biosynthesis; glycogen biosynthesis. Synthesizes alpha-1,4-glucan chains using ADP-glucose. This Paramagnetospirillum magneticum (strain ATCC 700264 / AMB-1) (Magnetospirillum magneticum) protein is Glycogen synthase.